We begin with the raw amino-acid sequence, 466 residues long: Alpha-1A adrenergic receptor (466 aa).

Over 1 to 27 the chain is Extracellular; sequence MVFLSGNASDSSNCTQPPAPVNISKAI. Asparagine 7, asparagine 13, and asparagine 22 each carry an N-linked (GlcNAc...) asparagine glycan. The helical transmembrane segment at 28–51 threads the bilayer; it reads LLGVILGGLILFGVLGNILVILSV. At 52 to 64 the chain is on the cytoplasmic side; it reads ACHRHLHSVTHYY. The helical transmembrane segment at 65 to 88 threads the bilayer; the sequence is IVNLAVADLLLTSTVLPFSAIFEV. Residues 89-99 are Extracellular-facing; it reads LGYWAFGRVFC. A disulfide bridge connects residues cysteine 99 and cysteine 176. Residues 100-122 form a helical membrane-spanning segment; it reads NIWAAVDVLCCTASIMGLCIISI. Residues 123–143 lie on the Cytoplasmic side of the membrane; the sequence is DRYIGVSYPLRYPTIVTQRRG. The helical transmembrane segment at 144–167 threads the bilayer; it reads LMALLCVWALSLVISIGPLFGWRQ. Topologically, residues 168 to 181 are extracellular; it reads PAPEDETICQINEE. Residues 182–205 form a helical membrane-spanning segment; the sequence is PGYVLFSALGSFYLPLAIILVMYC. Residues 206-273 lie on the Cytoplasmic side of the membrane; sequence RVYVVAKRES…FSREKKAAKT (68 aa). The residue at position 215 (serine 215) is a Phosphoserine; by PKA. The chain crosses the membrane as a helical span at residues 274 to 297; that stretch reads LGIVVGCFVLCWLPFFLVMPIGSF. The Extracellular segment spans residues 298 to 305; it reads FPDFKPSE. Residues 306-329 form a helical membrane-spanning segment; it reads TVFKIVFWLGYLNSCINPIIYPCS. Over 330–466 the chain is Cytoplasmic; that stretch reads SQEFKKAFQN…ISLSENGEEV (137 aa). The Nuclear localization signal signature appears at 334-349; that stretch reads KKAFQNVLRIQCLCRK. Residue cysteine 345 is the site of S-palmitoyl cysteine attachment.

The protein belongs to the G-protein coupled receptor 1 family. Adrenergic receptor subfamily. ADRA1A sub-subfamily. In terms of assembly, homo- and heterooligomer. Heterooligomerizes with ADRA1B homooligomers in cardiac myocytes. Interacts with CAVIN4. Post-translationally, C-terminal Ser or Thr residues may be phosphorylated. As to expression, expressed in heart, brain, liver and prostate, but not in kidney, lung, adrenal, aorta and pituitary. Within the prostate, expressed in the apex, base, periurethral and lateral lobe. Isoform 4 is the most abundant isoform expressed in the prostate with high levels also detected in liver and heart.

It localises to the nucleus membrane. Its subcellular location is the cell membrane. The protein localises to the cytoplasm. The protein resides in the membrane. It is found in the caveola. In terms of biological role, this alpha-adrenergic receptor mediates its action by association with G proteins that activate a phosphatidylinositol-calcium second messenger system. Its effect is mediated by G(q) and G(11) proteins. Nuclear ADRA1A-ADRA1B heterooligomers regulate phenylephrine(PE)-stimulated ERK signaling in cardiac myocytes. This chain is Alpha-1A adrenergic receptor (ADRA1A), found in Homo sapiens (Human).